A 144-amino-acid polypeptide reads, in one-letter code: Ribonuclease VapC45 (144 aa).

Positions 7 and 102 each coordinate Mg(2+).

Belongs to the PINc/VapC protein family. The cofactor is Mg(2+).

In terms of biological role, toxic component of a type II toxin-antitoxin (TA) system. An RNase. Its cognate antitoxin is VapB45. In Mycobacterium tuberculosis (strain CDC 1551 / Oshkosh), this protein is Ribonuclease VapC45.